A 147-amino-acid chain; its full sequence is Large ribosomal subunit protein bL21 (147 aa).

The segment at 125–147 (EEVEAAPKAKKAAPKAKKEATKE) is disordered.

It belongs to the bacterial ribosomal protein bL21 family. As to quaternary structure, part of the 50S ribosomal subunit. Contacts protein L20.

In terms of biological role, this protein binds to 23S rRNA in the presence of protein L20. In Flavobacterium johnsoniae (strain ATCC 17061 / DSM 2064 / JCM 8514 / BCRC 14874 / CCUG 350202 / NBRC 14942 / NCIMB 11054 / UW101) (Cytophaga johnsonae), this protein is Large ribosomal subunit protein bL21.